The sequence spans 101 residues: ATP-dependent Clp protease adapter protein ClpS (101 aa).

This sequence belongs to the ClpS family. Binds to the N-terminal domain of the chaperone ClpA.

Its function is as follows. Involved in the modulation of the specificity of the ClpAP-mediated ATP-dependent protein degradation. The polypeptide is ATP-dependent Clp protease adapter protein ClpS (Treponema denticola (strain ATCC 35405 / DSM 14222 / CIP 103919 / JCM 8153 / KCTC 15104)).